The chain runs to 280 residues: Energy-coupling factor transporter ATP-binding protein EcfA1 (280 aa).

In terms of domain architecture, ABC transporter spans 6-244 (IECKNVVYKY…VPLMKNIGLD (239 aa)). Residue 43–50 (GHNGSGKS) participates in ATP binding.

The protein belongs to the ABC transporter superfamily. Energy-coupling factor EcfA family. Forms a stable energy-coupling factor (ECF) transporter complex composed of 2 membrane-embedded substrate-binding proteins (S component), 2 ATP-binding proteins (A component) and 2 transmembrane proteins (T component).

The protein localises to the cell membrane. Functionally, ATP-binding (A) component of a common energy-coupling factor (ECF) ABC-transporter complex. Unlike classic ABC transporters this ECF transporter provides the energy necessary to transport a number of different substrates. The chain is Energy-coupling factor transporter ATP-binding protein EcfA1 from Clostridium novyi (strain NT).